The primary structure comprises 1105 residues: Integrator complex subunit 2 (1105 aa).

A helical transmembrane segment spans residues 822 to 842 (FVFCSPYLLMILLRILKGSLA).

It belongs to the Integrator subunit 2 family. Belongs to the multiprotein complex Integrator, at least composed of IntS1, IntS2, IntS3, IntS4, omd/IntS5, IntS6, defl/IntS7, IntS8, IntS9, IntS10, IntS11, IntS12, asun/IntS13, IntS14 and IntS15. The core complex associates with protein phosphatase 2A subunits mts/PP2A and Pp2A-29B, to form the Integrator-PP2A (INTAC) complex.

It is found in the nucleus membrane. Its subcellular location is the nucleus. In terms of biological role, component of the integrator complex, a multiprotein complex that terminates RNA polymerase II (Pol II) transcription in the promoter-proximal region of genes. The integrator complex provides a quality checkpoint during transcription elongation by driving premature transcription termination of transcripts that are unfavorably configured for transcriptional elongation: the complex terminates transcription by (1) catalyzing dephosphorylation of the C-terminal domain (CTD) of Pol II subunit Polr2A/Rbp1 and Spt5, and (2) degrading the exiting nascent RNA transcript via endonuclease activity. The integrator complex is also involved in the 3'-end processing of the U7 snRNA, and also the spliceosomal snRNAs U1, U2, U4 and U5. This chain is Integrator complex subunit 2, found in Drosophila melanogaster (Fruit fly).